We begin with the raw amino-acid sequence, 34 residues long: U2-theraphotoxin-Bs1a (34 aa).

3 disulfides stabilise this stretch: Cys2/Cys16, Cys9/Cys21, and Cys15/Cys28.

Expressed by the venom gland.

It is found in the secreted. The polypeptide is U2-theraphotoxin-Bs1a (Brachypelma smithi (Mexican red knee tarantula)).